A 100-amino-acid chain; its full sequence is Urease subunit gamma (100 aa).

This sequence belongs to the urease gamma subunit family. In terms of assembly, heterotrimer of UreA (gamma), UreB (beta) and UreC (alpha) subunits. Three heterotrimers associate to form the active enzyme.

It localises to the cytoplasm. The enzyme catalyses urea + 2 H2O + H(+) = hydrogencarbonate + 2 NH4(+). The protein operates within nitrogen metabolism; urea degradation; CO(2) and NH(3) from urea (urease route): step 1/1. The sequence is that of Urease subunit gamma from Pseudoalteromonas translucida (strain TAC 125).